A 420-amino-acid chain; its full sequence is UDP-N-acetylmuramoylalanine--D-glutamate ligase (420 aa).

Position 109–115 (109–115 (GSVGKST)) interacts with ATP.

It belongs to the MurCDEF family.

It is found in the cytoplasm. It carries out the reaction UDP-N-acetyl-alpha-D-muramoyl-L-alanine + D-glutamate + ATP = UDP-N-acetyl-alpha-D-muramoyl-L-alanyl-D-glutamate + ADP + phosphate + H(+). The protein operates within cell wall biogenesis; peptidoglycan biosynthesis. In terms of biological role, cell wall formation. Catalyzes the addition of glutamate to the nucleotide precursor UDP-N-acetylmuramoyl-L-alanine (UMA). The polypeptide is UDP-N-acetylmuramoylalanine--D-glutamate ligase (Fervidobacterium nodosum (strain ATCC 35602 / DSM 5306 / Rt17-B1)).